A 128-amino-acid chain; its full sequence is Disintegrin ocellatusin (128 aa).

Residues 1–20 form the signal peptide; that stretch reads MIPVLLVTICLAVFPFQGSS. Residues 21 to 65 constitute a propeptide that is removed on maturation; it reads IILESGNINDYEIVYPKKVAVLPTGAMNSAHPCYDPVTCQPKEKE. The Disintegrin domain maps to 26 to 112; sequence GNINDYEIVY…DCPRNPYKGE (87 aa). Disulfide bonds link Cys-53-Cys-59, Cys-67-Cys-76, Cys-72-Cys-97, Cys-73-Cys-102, and Cys-85-Cys-104. The short motif at 89–91 is the Cell attachment site element; the sequence is RGD. A propeptide spanning residues 116–128 is cleaved from the precursor; the sequence is MEWPAPAKGSVLM.

Monomer. Expressed by the venom gland.

The protein localises to the secreted. Its function is as follows. The disintegrin ocellatusin-10c1 is a poor inhibitor of platelet aggregation. The disintegrin inhibits the adhesion of cells expressing the RGD-dependent integrin alpha-5/beta-1 (ITGA5/ITGB1) to immobilized fibronectin. Inhibition on alpha-2b/beta-3 (ITGA2B/ITGB3) is low, and there is no inhibition on alpha-1/beta-1 (ITGA1/ITGB1), alpha-2/beta-1 (ITGA2/ITGB1) and alpha-6/beta-1 (ITGA6/ITGB1). The short monomeric disintegrin ocellatusin inhibits ADP-induced platelet aggregation (IC(50)=168 nM). Inhibits alpha-5/beta-1 (ITGA5/ITGB1) integrin and induces the expression of a ligand-induced binding site epitope on beta-1 integrin subunit. Has a direct chemotactic stimulus on human neutrophils in vitro. The sequence is that of Disintegrin ocellatusin from Echis ocellatus (Ocellated saw-scaled viper).